Here is a 1097-residue protein sequence, read N- to C-terminus: Protein toll (1097 aa).

The N-terminal stretch at 1-27 (MSRLKAASELALLVIILQLLQWPGSEA) is a signal peptide. At 28 to 807 (SFGRDACSEM…ICPAEKGVFI (780 aa)) the chain is on the extracellular side. Disulfide bonds link cysteine 34-cysteine 45, cysteine 43-cysteine 56, and cysteine 79-cysteine 107. N-linked (GlcNAc...) asparagine glycans are attached at residues asparagine 80, asparagine 140, and asparagine 175. LRR repeat units lie at residues 175–195 (NLSH…LFDD), 198–219 (NLES…IFGK), 222–243 (KLKQ…DFEG), 246–267 (SVLG…VFAH), 270–291 (NVTD…LFDH), 294–314 (HLNE…PSRL), 320–340 (ELQI…LFEH), 343–364 (QITN…LLEH), 367–388 (NLLS…LFAH), 391–412 (NLTD…IFSN), 415–436 (NLVT…AFVS), 439–460 (GLRH…LDIM), 474–495 (GLLT…WKNT), 498–521 (QLRE…AFLS), and 523–544 (NRLH…EDVH). A glycan (N-linked (GlcNAc...) asparagine) is linked at asparagine 235. 2 N-linked (GlcNAc...) asparagine glycosylation sites follow: asparagine 270 and asparagine 275. Asparagine 346 carries N-linked (GlcNAc...) asparagine glycosylation. N-linked (GlcNAc...) asparagine glycosylation is present at asparagine 391. N-linked (GlcNAc...) asparagine glycosylation is found at asparagine 482, asparagine 508, and asparagine 528. Residues 561–620 (NPLVCDCTILWFIQLVRGVHKPQYSRQFKLRTDRLVCSQPNVLEGTPVRQIEPQTLICPL) form the LRRCT 1 domain. 4 disulfides stabilise this stretch: cysteine 565-cysteine 597, cysteine 567-cysteine 618, cysteine 631-cysteine 637, and cysteine 635-cysteine 650. Residues 622-663 (FSDDPRERKCPRGCNCHVRTYDKALVINCHSGNLTHVPRLPN) form the LRRNT domain. 6 N-linked (GlcNAc...) asparagine glycosylation sites follow: asparagine 654, asparagine 677, asparagine 703, asparagine 715, asparagine 730, and asparagine 738. LRR repeat units lie at residues 669–690 (QLME…NTPG), 693–713 (SVTS…DQLP), and 715–738 (NLTH…GFLN). The region spanning 751–801 (NPWMCDCTAKPLLLFTQDNFERIGDRNEMMCVNAEMPTRMVELSTNDICPA) is the LRRCT 2 domain. 2 disulfides stabilise this stretch: cysteine 755–cysteine 781 and cysteine 757–cysteine 799. Residues 808-828 (ALAVVIALTGLLAGFTAALYY) traverse the membrane as a helical segment. Residues 829–1097 (KFQTEIKIWL…INTNAKQSDV (269 aa)) lie on the Cytoplasmic side of the membrane. The TIR domain occupies 857 to 993 (KKFDAFISYS…WFWDKLRFAL (137 aa)).

Belongs to the Toll-like receptor family. In terms of assembly, in the absence of ligand, forms a low-affinity disulfide-linked homodimer. In the presence of ligand, crystal structures show one Tl molecule bound to a spaetzle C-106 homodimer. However, the active complex probably consists of two Tl molecules bound to a spaetzle C-106 homodimer. This is supported by in vitro experiments which also show binding of the spaetzle C-106 dimer to 2 Tl receptors. Ligand binding induces conformational changes in the extracellular domain of Tl. This may enable a secondary homodimerization interface at the C-terminus of the Tl extracellular domain. In early embryos, concentrated in the pseudocleavage furrows that form transiently between nuclei before cellularization and in the cleavage furrows during cellularization (at protein level). Later, found on cells in the mesectoderm, stomodeum, proctodeum, anterior and posterior midguts, splanchnopleura, salivary gland placode and adjacent to the segmentally repeated tracheal placodes (at protein level). During and after germ band shortening, localized in a number of cell types, including the salivary gland, foregut, hindgut, Malpighian tubules and epidermis (at protein level). In embryos, high expression in M13 with comparatively low expression in M12.

The protein localises to the cell membrane. Its subcellular location is the cytoplasm. Functionally, receptor for the cleaved activated form of spz, spaetzle C-106. Binding to spaetzle C-106 activates the Toll signaling pathway and induces expression of the antifungal peptide drosomycin. Component of the extracellular signaling pathway that establishes dorsal-ventral polarity in the embryo. Promotes heterophilic cellular adhesion. Involved in synaptic targeting of motoneurons RP5 and V to muscle 12 (M12); functions as a repulsive cue inhibiting motoneuron synapse formation on muscle 13 (M13) to guide RP5 and V to the neighboring M12, where its expression is repressed by tey. May also function in embryonic neuronal survival and the synaptic targeting of SNa motoneurons. This chain is Protein toll, found in Drosophila melanogaster (Fruit fly).